The primary structure comprises 550 residues: Amino acid transporter AVT1C (550 aa).

Positions 1–11 (MNHVPSDQSFY) are enriched in polar residues. Disordered regions lie at residues 1–44 (MNHV…ENQA) and 128–148 (QGLLSPIPSRRGSMRKDEKSS). Basic and acidic residues predominate over residues 20 to 34 (RKDYVEEDGGSHSDS). The next 11 helical transmembrane spans lie at 165–185 (AVLNGLNVLCGVGILSTPYAA), 190–210 (WLGLMILFVYGLLSFYTGILL), 237–257 (IFVSIVLYLELYACCVEYIIL), 283–303 (LFALLTTLAVLPTVWLRDLSV), 307–327 (ISAGGVIASVLVVLCLFWIGL), 342–362 (LSTLPVAIGLYGYCYSGHAVF), 377–397 (AVLLTCFGICTLMYAGVAVMG), 422–442 (IAVWTTVVNPFTKYALTISPV), 462–484 (IGIRTLLVFSTLLVGLAIPFFGL), 488–510 (LIGSLLTMLVTLILPPACFLSIV), and 521–541 (LCVLIIIVGAISSVIGSYSAL).

The protein belongs to the amino acid/polyamine transporter 2 family. Amino acid/auxin permease (AAAP) (TC 2.A.18.5) subfamily.

Its subcellular location is the membrane. This chain is Amino acid transporter AVT1C, found in Arabidopsis thaliana (Mouse-ear cress).